Here is a 303-residue protein sequence, read N- to C-terminus: N-acetyl-D-glucosamine kinase (303 aa).

ATP is bound by residues 4-11 (GFDIGGTK) and 133-140 (GVGGGLIF). Residues His157, Cys177, Cys179, and Cys184 each contribute to the Zn(2+) site.

The protein belongs to the ROK (NagC/XylR) family. NagK subfamily.

It carries out the reaction N-acetyl-D-glucosamine + ATP = N-acetyl-D-glucosamine 6-phosphate + ADP + H(+). It functions in the pathway cell wall biogenesis; peptidoglycan recycling. Functionally, catalyzes the phosphorylation of N-acetyl-D-glucosamine (GlcNAc) derived from cell-wall degradation, yielding GlcNAc-6-P. This chain is N-acetyl-D-glucosamine kinase, found in Escherichia coli O9:H4 (strain HS).